The primary structure comprises 109 residues: T cell receptor alpha variable 27 (109 aa).

A signal peptide spans 1-19 (MVLKFSVSILWIQLAWVST). Residues 20–109 (QLLEQSPQFL…GDTGLYLCAG (90 aa)) form the Ig-like domain. N-linked (GlcNAc...) asparagine glycosylation is found at Asn36 and Asn42. The cysteines at positions 41 and 107 are disulfide-linked.

In terms of assembly, alpha-beta TR is a heterodimer composed of an alpha and beta chain; disulfide-linked. The alpha-beta TR is associated with the transmembrane signaling CD3 coreceptor proteins to form the TR-CD3 (TcR or TCR). The assembly of alpha-beta TR heterodimers with CD3 occurs in the endoplasmic reticulum where a single alpha-beta TR heterodimer associates with one CD3D-CD3E heterodimer, one CD3G-CD3E heterodimer and one CD247 homodimer forming a stable octameric structure. CD3D-CD3E and CD3G-CD3E heterodimers preferentially associate with TR alpha and TR beta chains, respectively. The association of the CD247 homodimer is the last step of TcR assembly in the endoplasmic reticulum and is required for transport to the cell surface. (Microbial infection) Interacts with Staphylococcus aureus enterotoxin H/entH.

It is found in the cell membrane. V region of the variable domain of T cell receptor (TR) alpha chain that participates in the antigen recognition. Alpha-beta T cell receptors are antigen specific receptors which are essential to the immune response and are present on the cell surface of T lymphocytes. Recognize peptide-major histocompatibility (MH) (pMH) complexes that are displayed by antigen presenting cells (APC), a prerequisite for efficient T cell adaptive immunity against pathogens. Binding of alpha-beta TR to pMH complex initiates TR-CD3 clustering on the cell surface and intracellular activation of LCK that phosphorylates the ITAM motifs of CD3G, CD3D, CD3E and CD247 enabling the recruitment of ZAP70. In turn, ZAP70 phosphorylates LAT, which recruits numerous signaling molecules to form the LAT signalosome. The LAT signalosome propagates signal branching to three major signaling pathways, the calcium, the mitogen-activated protein kinase (MAPK) kinase and the nuclear factor NF-kappa-B (NF-kB) pathways, leading to the mobilization of transcription factors that are critical for gene expression and essential for T cell growth and differentiation. The T cell repertoire is generated in the thymus, by V-(D)-J rearrangement. This repertoire is then shaped by intrathymic selection events to generate a peripheral T cell pool of self-MH restricted, non-autoaggressive T cells. Post-thymic interaction of alpha-beta TR with the pMH complexes shapes TR structural and functional avidity. This is T cell receptor alpha variable 27 from Homo sapiens (Human).